The sequence spans 407 residues: 1-deoxy-D-xylulose 5-phosphate reductoisomerase (407 aa).

Residues threonine 25, glycine 26, serine 27, isoleucine 28, asparagine 53, and asparagine 136 each contribute to the NADPH site. Residue lysine 137 coordinates 1-deoxy-D-xylulose 5-phosphate. Glutamate 138 contacts NADPH. Aspartate 162 serves as a coordination point for Mn(2+). Residues serine 163, glutamate 164, serine 188, and histidine 211 each contribute to the 1-deoxy-D-xylulose 5-phosphate site. Residue glutamate 164 coordinates Mn(2+). Glycine 217 contributes to the NADPH binding site. 4 residues coordinate 1-deoxy-D-xylulose 5-phosphate: serine 224, asparagine 229, lysine 230, and glutamate 233. Glutamate 233 lines the Mn(2+) pocket.

It belongs to the DXR family. The cofactor is Mg(2+). Mn(2+) is required as a cofactor.

It catalyses the reaction 2-C-methyl-D-erythritol 4-phosphate + NADP(+) = 1-deoxy-D-xylulose 5-phosphate + NADPH + H(+). It functions in the pathway isoprenoid biosynthesis; isopentenyl diphosphate biosynthesis via DXP pathway; isopentenyl diphosphate from 1-deoxy-D-xylulose 5-phosphate: step 1/6. Catalyzes the NADPH-dependent rearrangement and reduction of 1-deoxy-D-xylulose-5-phosphate (DXP) to 2-C-methyl-D-erythritol 4-phosphate (MEP). In Rhodopseudomonas palustris (strain TIE-1), this protein is 1-deoxy-D-xylulose 5-phosphate reductoisomerase.